A 545-amino-acid polypeptide reads, in one-letter code: Carboxypeptidase Y homolog A (545 aa).

The N-terminal stretch at 1–17 (MKSLALALLVGGAIAAG) is a signal peptide. Positions 18 to 123 (PQQQVLQAPV…KLEAYDLRVK (106 aa)) are excised as a propeptide. 5 disulfide bridges follow: Cys177/Cys416, Cys311/Cys325, Cys335/Cys358, Cys342/Cys351, and Cys380/Cys386. Asn208 is a glycosylation site (N-linked (GlcNAc...) asparagine). Ser264 is an active-site residue. Asp455 is an active-site residue. Asn485, Asn491, and Asn506 each carry an N-linked (GlcNAc...) asparagine glycan. Residue His517 is part of the active site.

Belongs to the peptidase S10 family.

The protein localises to the vacuole. The catalysed reaction is Release of a C-terminal amino acid with broad specificity.. Functionally, vacuolar carboxypeptidase involved in degradation of small peptides. Digests preferentially peptides containing an aliphatic or hydrophobic residue in P1' position, as well as methionine, leucine or phenylalanine in P1 position of ester substrate. The protein is Carboxypeptidase Y homolog A (CPYA) of Ajellomyces dermatitidis (strain ER-3 / ATCC MYA-2586) (Blastomyces dermatitidis).